The chain runs to 478 residues: Adenosylhomocysteinase (478 aa).

3 residues coordinate substrate: threonine 57, aspartate 139, and glutamate 201. Residue 202 to 204 (TTT) participates in NAD(+) binding. Substrate-binding residues include lysine 231 and aspartate 235. NAD(+)-binding positions include asparagine 236, 265-270 (GYGDVG), glutamate 288, asparagine 323, 344-346 (IGH), and asparagine 392.

It belongs to the adenosylhomocysteinase family. The cofactor is NAD(+).

It is found in the cytoplasm. It catalyses the reaction S-adenosyl-L-homocysteine + H2O = L-homocysteine + adenosine. The protein operates within amino-acid biosynthesis; L-homocysteine biosynthesis; L-homocysteine from S-adenosyl-L-homocysteine: step 1/1. May play a key role in the regulation of the intracellular concentration of adenosylhomocysteine. This is Adenosylhomocysteinase from Corynebacterium efficiens (strain DSM 44549 / YS-314 / AJ 12310 / JCM 11189 / NBRC 100395).